The sequence spans 117 residues: Nascent polypeptide-associated complex protein (117 aa).

The NAC-A/B domain occupies Pro-3–Thr-72.

This sequence belongs to the NAC-alpha family. In terms of assembly, homodimer. Interacts with the ribosome. Binds ribosomal RNA.

Contacts the emerging nascent chain on the ribosome. The protein is Nascent polypeptide-associated complex protein of Aeropyrum pernix (strain ATCC 700893 / DSM 11879 / JCM 9820 / NBRC 100138 / K1).